A 730-amino-acid polypeptide reads, in one-letter code: MHCGLLEQPDMDSTESWIERCLSESENKCYSSHTSLGNISNDETDEEKENRASKPHSTPATLQWLGENYEIAEGVCIPRSALYMHYLDFCEKNDTQPVNAASFGKIIRQQFPQLTTRRLGTRGQSKYHYYGIAVKESSQYYDVMYSKKGAAWVNETGKKEVTKQTVAYSPRSKLGTLLPEFPNVKDLNLPSSLPEEKISTFIMMYRTHCQRILDTVIRANFDEVQSFLLHFWQGMPPHMLPVLGSSTVVNIVGVCDSILYKAISGVLMPTVLQALPDSLTQVIRKFAKQLDEWLKVALHDLPENLRNIKFELSKRFSQILRRQTSLNHLCQASRTVIHSADITFQMLEDWRNVDLNSITKQSLYTIEDSREEHRKLIIQLYQEFDHLLEDQSPIESYIDWLDSMVDRCVVKVASKKQGSLKKVAQQFLLIWSCFGTRVIRDMTLHSAPSFGSFHLIHLMFDDYVLYLLESLHCQERANELMRAMKGEAHGEIREERVLGEPAISTPSPVPFSPAASSSSVEIPSATSPVSNQSPEVGVVAATTGTMQSYTWSLTYTVTTAANGPGENGQQVPCMRSPHMTPSVTHRIPVYPHREDGYTGSYNYGTYSNQGHHPIASQYTSLPHESGLSGPLYTAYHRSSSQYPFNSQTRMEPCLMSGATRLHPSQVAPRWPDVTSTNTCFTSPTMHSARYANTSDMYTSLAPRRNSDYEHMQHFPGFAYINGEASAGWAK.

The span at 30–41 shows a compositional bias: polar residues; that stretch reads YSSHTSLGNISN. Residues 30-59 are disordered; that stretch reads YSSHTSLGNISNDETDEEKENRASKPHSTP. Residues 61–136 constitute a DNA-binding region (RFX-type winged-helix); the sequence is TLQWLGENYE…YHYYGIAVKE (76 aa). A disordered region spans residues 500–532; sequence EPAISTPSPVPFSPAASSSSVEIPSATSPVSNQ. Positions 512 to 528 are enriched in low complexity; it reads SPAASSSSVEIPSATSP.

The protein belongs to the RFX family.

The protein localises to the nucleus. Functionally, required for neural tube ciliogenesis during embryogenesis. The polypeptide is Regulatory factor X 4 (Xenopus laevis (African clawed frog)).